A 551-amino-acid polypeptide reads, in one-letter code: MTKKMLDNLYKFSLEGKMTDIILEIEDDNSIITMNLHKNILAASCSYFDRLFNGNFLDSNTQKVKINVSNSLITKNIIKSFYGQENDVIDIPDWQYILEEIICKDYLGLDYDTSTLKDINVPSEYYDLLVYVAGIVGFNNPNITNLLTDLMPIDYDLTNISKDDIEFLLNRTGDCIFSLQGYESRYKTHRKYRLKILDSMTGNIIKTTNKYITKKFVYDFMNNEVICIDFDKNTSLIKCLKLSTNSEYEIKRSHNVENIILSNDGKILISYHIDKSETKFNSRRRSKEIAKSCLFKFFDVSDKKILFSFYIKEVVEKNTHIFNNHSDSEDDSPYCDELSKFYFEIKFMDISPDDKYLVCCFSTKFCLCLNIETKEVLWTTNLCNINNDNYYFNNSILSSSLYIVSLKDMIYVLDVSNGNTLKKIKKYNEGVYSFDDNVMMIYHSSKIEIYDWKNDKTIRTIKSTEKLLKHVYNPRTMTLYSSNNYDNIVSYKFNNFDIDTFTNRIISDDCDEFVFVNNYNKKIQDKLSDYLKTQNKTSEYDCVGSHINEID.

Residues 19 to 90 form the BTB domain; the sequence is TDIILEIEDD…FYGQENDVID (72 aa).

This sequence belongs to the mimivirus BTB/WD family.

The chain is Putative BTB/POZ domain-containing protein L76 from Acanthamoeba polyphaga (Amoeba).